The primary structure comprises 449 residues: Dynein regulatory complex protein 10 (449 aa).

Residues 90 to 125 (AVREHEDLCQVLLENVRCLKEKERQLQEQKEAEEEG) adopt a coiled-coil conformation. In terms of domain architecture, IQ spans 400-429 (MVRAATLIQALWKGYLVRSLLRSKKKRGKG). Residues 422–449 (SKKKRGKGKAKDKEKGKQKGKEKGKGKK) are disordered. Over residues 430–449 (KAKDKEKGKQKGKEKGKGKK) the composition is skewed to basic and acidic residues.

The protein belongs to the DRC10 family. Component of the nexin-dynein regulatory complex (N-DRC). Interacts with CFAP52.

The protein localises to the cytoplasm. It localises to the cytoskeleton. Its subcellular location is the flagellum axoneme. In terms of biological role, component of the nexin-dynein regulatory complex (N-DRC), a key regulator of ciliary/flagellar motility which maintains the alignment and integrity of the distal axoneme and regulates microtubule sliding in motile axonemes. This Homo sapiens (Human) protein is Dynein regulatory complex protein 10 (IQCD).